The primary structure comprises 501 residues: Cytochrome P450 71D6 (501 aa).

Cys-442 lines the heme pocket.

This sequence belongs to the cytochrome P450 family. Heme is required as a cofactor.

The protein is Cytochrome P450 71D6 (CYP71D6) of Solanum chacoense (Chaco potato).